The chain runs to 303 residues: Oxygen-dependent coproporphyrinogen-III oxidase (303 aa).

Residue Ser93 participates in substrate binding. A divalent metal cation is bound by residues His97 and His107. The active-site Proton donor is His107. 109 to 111 provides a ligand contact to substrate; that stretch reads NVR. 2 residues coordinate a divalent metal cation: His146 and His176. The important for dimerization stretch occupies residues 241–276; sequence YVEFNLVYDRGTLFGLQSGGRTESILMSLPPQVRWG. Substrate is bound at residue 259 to 261; that stretch reads GGR.

It belongs to the aerobic coproporphyrinogen-III oxidase family. As to quaternary structure, homodimer. Requires a divalent metal cation as cofactor.

It localises to the cytoplasm. It carries out the reaction coproporphyrinogen III + O2 + 2 H(+) = protoporphyrinogen IX + 2 CO2 + 2 H2O. It functions in the pathway porphyrin-containing compound metabolism; protoporphyrin-IX biosynthesis; protoporphyrinogen-IX from coproporphyrinogen-III (O2 route): step 1/1. Involved in the heme biosynthesis. Catalyzes the aerobic oxidative decarboxylation of propionate groups of rings A and B of coproporphyrinogen-III to yield the vinyl groups in protoporphyrinogen-IX. This Pseudomonas putida (strain W619) protein is Oxygen-dependent coproporphyrinogen-III oxidase.